A 310-amino-acid chain; its full sequence is Fatty acid elongase 1 (310 aa).

The Lumenal portion of the chain corresponds to 1-63 (MVSDWKNFCL…VGKQPLSEPR (63 aa)). A helical membrane pass occupies residues 64 to 84 (PVLLFIAMYYVVIFGGRSLVK). Topologically, residues 85-100 (SCKPLKLRFISQVHNL) are cytoplasmic. Residues 101-121 (MLTSVSFLWLILMVEQMLPIV) traverse the membrane as a helical segment. The Lumenal portion of the chain corresponds to 122–141 (YRHGLYFAVCNVESWTQPME). The helical transmembrane segment at 142–163 (TLYYLNYMTKFVEFADTVLMVL) threads the bilayer. At 164-174 (KHRKLTFLHTY) the chain is on the cytoplasmic side. The HxxHH motif signature appears at 172 to 176 (HTYHH). A helical membrane pass occupies residues 175–196 (HHGATALLCYNQLVGYTAVTWV). The Lumenal portion of the chain corresponds to 197-201 (PVTLN). Residues 202–223 (LAVHVLMYWYYFLSASGIRVWW) traverse the membrane as a helical segment. Topologically, residues 224 to 234 (KAWVTRLQIVQ) are cytoplasmic. Residues 235–255 (FMLDLIVVYYVLYQKIVAAYF) traverse the membrane as a helical segment. The Lumenal portion of the chain corresponds to 256 to 271 (KNACTPQCEDCLGSMT). A helical transmembrane segment spans residues 272 to 292 (AIAAGAAILTSYLFLFISFYI). Over 293-310 (EVYKRGSASGKKKINKNN) the chain is Cytoplasmic. A Di-lysine motif motif is present at residues 304-307 (KKIN).

The protein belongs to the ELO family.

It is found in the endoplasmic reticulum membrane. It carries out the reaction a very-long-chain acyl-CoA + malonyl-CoA + H(+) = a very-long-chain 3-oxoacyl-CoA + CO2 + CoA. The enzyme catalyses tetradecanoyl-CoA + malonyl-CoA + H(+) = 3-oxohexadecanoyl-CoA + CO2 + CoA. It catalyses the reaction (9Z)-tetradecenoyl-CoA + malonyl-CoA + H(+) = 3-oxo-(11Z)-hexadecenoyl-CoA + CO2 + CoA. Component of a microsomal membrane bound medium-chain fatty acid elongation system, which extends medium-chain-length fatty acids to long-chain fatty acids. Component of elongase I, which extends 12-16-carbon fatty acyl-CoAs such as lauroyl-CoA to 14-18-carbon fatty acids by incorporation of malonyl-CoA. The sequence is that of Fatty acid elongase 1 from Saccharomyces cerevisiae (strain ATCC 204508 / S288c) (Baker's yeast).